A 390-amino-acid chain; its full sequence is MQLTIKALVGILTTISAATAVSFDMENLGAEKRGVSGEELHMLHGNEVLARFANGVYPEVANGTRVSKRAGGAEVDLTSVGGGTAWAVKAKIGSNEEEVTMLLDSGYEHALVAADSDYSPGKSSSNENTGEKFFAGFLTGGGNEGTIHLDDLSVGGLKASKFAFGYTKNRDFSSNQKLGGILGMSLPGHVDYVPGFKNHGWGGFIQTLKNQGVIDEAMYQMTLKGDGGKLSIGEVDDSQYEGDLETLMNTGKAYGHCGFKGTLNGEKHNFLLDSGTTGIAGSYDSVKKFLQGMSGVELVEEDKRGSVTGKVDCDSMPSFKISVDGKFDVKLSDDVMKKYDLGNGKCLLPIYGYTNMPKSYSYNWIVGGAFMREVSVVCKFDSNEMQIARQ.

The first 20 residues, 1–20 (MQLTIKALVGILTTISAATA), serve as a signal peptide directing secretion. Positions 21-69 (VSFDMENLGAEKRGVSGEELHMLHGNEVLARFANGVYPEVANGTRVSKR) are cleaved as a propeptide — removed in mature form. An N-linked (GlcNAc...) asparagine glycan is attached at Asn62. The 303-residue stretch at 86-388 (WAVKAKIGSN…KFDSNEMQIA (303 aa)) folds into the Peptidase A1 domain. Active-site residues include Asp104 and Asp273. Residues Cys313 and Cys346 are joined by a disulfide bond.

The protein belongs to the peptidase A1 family.

It is found in the secreted. In terms of biological role, probable inactive secreted aspartyl protease. May promote an inflammatory immune response in the host when the host skin barrier is breached. Has no detectable protease activity in vitro on fluorogenic substrates, a peptide library, or with the general protease substrate casein. The presence of the enzyme also does not affect the activity of the secreted aspartyl protease SAP1. The protein is Probable inactive secreted aspartyl protease of Malassezia globosa (strain ATCC MYA-4612 / CBS 7966) (Dandruff-associated fungus).